The chain runs to 1384 residues: DNA-directed RNA polymerase subunit beta (1384 aa).

It belongs to the RNA polymerase beta chain family. In terms of assembly, the RNAP catalytic core consists of 2 alpha, 1 beta, 1 beta' and 1 omega subunit. When a sigma factor is associated with the core the holoenzyme is formed, which can initiate transcription.

It carries out the reaction RNA(n) + a ribonucleoside 5'-triphosphate = RNA(n+1) + diphosphate. In terms of biological role, DNA-dependent RNA polymerase catalyzes the transcription of DNA into RNA using the four ribonucleoside triphosphates as substrates. This chain is DNA-directed RNA polymerase subunit beta, found in Xylella fastidiosa (strain M23).